Consider the following 95-residue polypeptide: Large ribosomal subunit protein bL25 (95 aa).

Belongs to the bacterial ribosomal protein bL25 family. As to quaternary structure, part of the 50S ribosomal subunit; part of the 5S rRNA/L5/L18/L25 subcomplex. Contacts the 5S rRNA. Binds to the 5S rRNA independently of L5 and L18.

This is one of the proteins that binds to the 5S RNA in the ribosome where it forms part of the central protuberance. The chain is Large ribosomal subunit protein bL25 from Buchnera aphidicola subsp. Acyrthosiphon pisum (strain 5A).